The chain runs to 435 residues: Mitochondrial association factor 1 form b0 (435 aa).

The first 27 residues, 1-27 (MWRIWRCRLSFLFVTGCLLGALTAGLG), serve as a signal peptide directing secretion. The Vacuolar segment spans residues 28–96 (SQMSDSVGRN…VTARRRRNRR (69 aa)). The interval 43 to 89 (GVADASQEAGDVVEERTERTEEQVFAPGPPRRHSSESLFPRNPSVTA) is disordered. Basic and acidic residues predominate over residues 55–64 (VEERTERTEE). The chain crosses the membrane as a helical span at residues 97–117 (ITLIATAVGVAVILAALYVLR). The Cytoplasmic segment spans residues 118-435 (RRRAQPPQEP…ESTYLASMLD (318 aa)). The tract at residues 120-162 (RAQPPQEPEPPTRLRTPRPRAPSGQQQPSESEPPAGVPMKPGS) is disordered.

The protein resides in the parasitophorous vacuole membrane. In terms of biological role, during host cell infection by tachyzoites, does not play a role in tethering the parasitophorous vacuole to the host mitochondria. The chain is Mitochondrial association factor 1 form b0 from Toxoplasma gondii.